The chain runs to 1460 residues: DNA-directed RNA polymerase III subunit RPC1 (1460 aa).

Zn(2+)-binding residues include C67, C70, C77, H80, C107, C110, and C154. Mg(2+) is bound by residues D511, D513, and D515. The segment at 858-870 is bridging helix; that stretch reads PPEFLFHAISGRE.

This sequence belongs to the RNA polymerase beta' chain family. As to quaternary structure, component of the RNA polymerase III (Pol III) complex consisting of 17 subunits.

The protein localises to the nucleus. It catalyses the reaction RNA(n) + a ribonucleoside 5'-triphosphate = RNA(n+1) + diphosphate. In terms of biological role, DNA-dependent RNA polymerase catalyzes the transcription of DNA into RNA using the four ribonucleoside triphosphates as substrates. Largest and catalytic core component of RNA polymerase III which synthesizes small RNAs, such as 5S rRNA and tRNAs. Forms the polymerase active center together with the second largest subunit. A single-stranded DNA template strand of the promoter is positioned within the central active site cleft of Pol III. A bridging helix emanates from RPC1 and crosses the cleft near the catalytic site and is thought to promote translocation of Pol III by acting as a ratchet that moves the RNA-DNA hybrid through the active site by switching from straight to bent conformations at each step of nucleotide addition. This chain is DNA-directed RNA polymerase III subunit RPC1 (RPO31), found in Saccharomyces cerevisiae (strain ATCC 204508 / S288c) (Baker's yeast).